We begin with the raw amino-acid sequence, 1014 residues long: Klotho (1014 aa).

A signal peptide spans 1 to 34 (MPARAPPRRLPRLLLLRLLSLHLLLLTLRARCLS). Over 35-983 (AEPGQGAQTW…GCGFFQTRKS (949 aa)) the chain is Extracellular. Glycosyl hydrolase-1 regions lie at residues 59–508 (LHDT…NNGF) and 517–955 (LEGT…NNGF). Residues N161, N285, N346, N609, N614, and N696 are each glycosylated (N-linked (GlcNAc...) asparagine). The helical transmembrane segment at 984 to 1004 (LLAFISFLVFAFVTSLALIYY) threads the bilayer. Topologically, residues 1005 to 1014 (YSKKGRRRYK) are cytoplasmic.

This sequence belongs to the glycosyl hydrolase 1 family. Klotho subfamily. As to quaternary structure, homodimer. Interacts with FGF23 and FGFR1. N-glycosylated. Present in cortical renal tubules and the parathyroid (at protein level). Strongly expressed in kidney. Expressed at low levels in brain, lung, intestine and ovaries.

It is found in the cell membrane. The protein localises to the apical cell membrane. The protein resides in the secreted. It catalyses the reaction a beta-D-glucuronoside + H2O = D-glucuronate + an alcohol. May have weak glycosidase activity towards glucuronylated steroids. However, it lacks essential active site Glu residues at positions 241 and 874, suggesting it may be inactive as a glycosidase in vivo. May be involved in the regulation of calcium and phosphorus homeostasis by inhibiting the synthesis of active vitamin D. Essential factor for the specific interaction between FGF23 and FGFR1. Its function is as follows. The Klotho peptide generated by cleavage of the membrane-bound isoform may be an anti-aging circulating hormone which would extend life span by inhibiting insulin/IGF1 signaling. This chain is Klotho (Kl), found in Rattus norvegicus (Rat).